A 264-amino-acid polypeptide reads, in one-letter code: MTMNTPRPRSQPPPPHPPLFKPTTPPPPPLLSTSTSTSPPHDFSFAHYLSSPPPSVQRRGRADMSRTPPLGRVGSDLSHNNYSSKANQHRQTGSSSSSKEKDREYKAKSKASSPFFSGLGGSWRSGLSRDEEVKRKAKAKTRGLDVGQWVKKYMASMVEHLLASFSRHGGGEREKREQQRRRPHSFSAHGPSALREQRERWRRRRGQLSSAPASLRASPVNSGHLSVGGSVKVSTSSEESTMEELQSAIEAAIAHCKNSITVAK.

Disordered regions lie at residues 1-146 (MTMN…GLDV) and 165-240 (FSRH…SEES). Pro residues predominate over residues 9–30 (RSQPPPPHPPLFKPTTPPPPPL). The span at 31–40 (LSTSTSTSPP) shows a compositional bias: low complexity. A compositionally biased stretch (polar residues) spans 77–97 (LSHNNYSSKANQHRQTGSSSS). Basic and acidic residues predominate over residues 98–107 (SKEKDREYKA). 2 stretches are compositionally biased toward low complexity: residues 208–219 (LSSAPASLRASP) and 227–239 (VGGS…SSEE).

In terms of assembly, interacts with BRI1. Phosphorylated by BRI1.

Functionally, negative regulator of brassinosteroid signaling. The protein is Probable BRI1 kinase inhibitor 1 (BKI1) of Oryza sativa subsp. japonica (Rice).